A 248-amino-acid polypeptide reads, in one-letter code: Triosephosphate isomerase (248 aa).

Asn-10 and Lys-12 together coordinate substrate. The Electrophile role is filled by His-95. Glu-165 functions as the Proton acceptor in the catalytic mechanism.

This sequence belongs to the triosephosphate isomerase family. Homodimer.

The enzyme catalyses D-glyceraldehyde 3-phosphate = dihydroxyacetone phosphate. It participates in carbohydrate biosynthesis; gluconeogenesis. It functions in the pathway carbohydrate degradation; glycolysis; D-glyceraldehyde 3-phosphate from glycerone phosphate: step 1/1. This chain is Triosephosphate isomerase (TPI1), found in Kluyveromyces marxianus (Yeast).